The chain runs to 495 residues: WD repeat-containing protein 37 (495 aa).

2 stretches are compositionally biased toward polar residues: residues 1 to 13 (MPTESASCSTARQ) and 22 to 31 (SLSIRRTNSS). The interval 1 to 50 (MPTESASCSTARQTKQKRKSHSLSIRRTNSSEQERTGLPRDMLEGQDSKL) is disordered. Residues 32-47 (EQERTGLPRDMLEGQD) show a composition bias toward basic and acidic residues. WD repeat units follow at residues 154–194 (GHRD…CLVK) and 197–236 (GHVGSVNSIKFHPSEQLALTASGDQTAHIWRYAVQLPTPQ). The tract at residues 237-266 (PVADTSQISGEDEVECSDKDEPDLDGDVSS) is disordered. The segment covering 246–264 (GEDEVECSDKDEPDLDGDV) has biased composition (acidic residues). WD repeat units follow at residues 280 to 319 (SHQGVVIAADWLVGGKQAVTASWDRTANLYDVETSELVHS), 322 to 361 (GHDQELTHCCTHPTQRLVVTSSRDTTFRLWDFRDPSIHSV), 366 to 404 (GHTDTVTSAVFTVGDNVVSGSDDRTVKVWDLKNMRSPIA), 407 to 446 (RTDSAINRINVCVGQKIIALPHDNRQVRLFDMSGVRLARL), and 453 to 494 (GHRR…LLQE).

As to quaternary structure, forms homodimers. Interacts with PACS1. Interacts with PACS2.

The protein localises to the cytoplasm. The protein resides in the nucleus. Its function is as follows. Required for normal ER Ca2+ handling in lymphocytes. Together with PACS1, it plays an essential role in stabilizing peripheral lymphocyte populations. The chain is WD repeat-containing protein 37 (WDR37) from Pongo abelii (Sumatran orangutan).